Here is a 190-residue protein sequence, read N- to C-terminus: RING finger protein 227 (190 aa).

The RING-type zinc-finger motif lies at 18-81 (CNICFRPYNL…RRAVTCPFCR (64 aa)). Positions 108 to 147 (ARAEREGDPMGSPAKDSGEDGEDDDGEAESEKGAGPPSAG) are disordered. Residues 126–135 (EDGEDDDGEA) are compositionally biased toward acidic residues.

The protein is RING finger protein 227 of Mus musculus (Mouse).